Here is a 198-residue protein sequence, read N- to C-terminus: Nucleoside triphosphate pyrophosphatase (198 aa).

Residue D72 is the Proton acceptor of the active site.

It belongs to the Maf family. The cofactor is a divalent metal cation.

It localises to the cytoplasm. The catalysed reaction is a ribonucleoside 5'-triphosphate + H2O = a ribonucleoside 5'-phosphate + diphosphate + H(+). It carries out the reaction a 2'-deoxyribonucleoside 5'-triphosphate + H2O = a 2'-deoxyribonucleoside 5'-phosphate + diphosphate + H(+). In terms of biological role, nucleoside triphosphate pyrophosphatase. May have a dual role in cell division arrest and in preventing the incorporation of modified nucleotides into cellular nucleic acids. This Acinetobacter baylyi (strain ATCC 33305 / BD413 / ADP1) protein is Nucleoside triphosphate pyrophosphatase.